A 343-amino-acid polypeptide reads, in one-letter code: 4-hydroxy-2-oxovalerate aldolase 1 (343 aa).

A Pyruvate carboxyltransferase domain is found at 8–260 (VTVHDMTLRD…ETGVDVAKIT (253 aa)). 16-17 (RD) contributes to the substrate binding site. Asp-17 contacts Mn(2+). His-20 acts as the Proton acceptor in catalysis. The substrate site is built by Ser-170 and His-199. Mn(2+) is bound by residues His-199 and His-201. A substrate-binding site is contributed by Tyr-290.

The protein belongs to the 4-hydroxy-2-oxovalerate aldolase family.

It catalyses the reaction (S)-4-hydroxy-2-oxopentanoate = acetaldehyde + pyruvate. This is 4-hydroxy-2-oxovalerate aldolase 1 from Dechloromonas aromatica (strain RCB).